Here is a 708-residue protein sequence, read N- to C-terminus: Metabotropic glutamate receptor-like protein L (708 aa).

Residues 1-24 (MKLIIKNLILLLVSCLYFLSNVSC) form the signal peptide. 4 N-linked (GlcNAc...) asparagine glycosylation sites follow: N21, N235, N310, and N366. Residues 25-370 (DQEVHMALLL…TTGSINKTFM (346 aa)) lie on the Extracellular side of the membrane. A helical membrane pass occupies residues 371-391 (AVSILEMAICLIIGIIVIFFF). Over 392-401 (SRNINIIYST) the chain is Cytoplasmic. A helical transmembrane segment spans residues 402 to 422 (IPYCLTILLGASLIAVAIFLW). The Extracellular portion of the chain corresponds to 423–435 (NLRDLNTQICTSK). A helical transmembrane segment spans residues 436-456 (IWMASLGYNVLIGFIIIKSSL). Residues 457 to 479 (IYFKFKEMVKSKNEKISPIPFGR) are Cytoplasmic-facing. A helical transmembrane segment spans residues 480–500 (IVLWFVPLLIIDCVLLIIYST). Topologically, residues 501 to 531 (SGNPGKIDSLGLDGIGRYEYTQNCVNNLTGD) are extracellular. N527 is a glycosylation site (N-linked (GlcNAc...) asparagine). The helical transmembrane segment at 532–552 (IILYIILVFHGLQLLYGCVIA) threads the bilayer. Topologically, residues 553–568 (WKTRVIDLEEFIEAHD) are cytoplasmic. Residues 569–589 (FATAIYLITFCSFIIVILMVG) traverse the membrane as a helical segment. The Extracellular portion of the chain corresponds to 590-597 (VTSTSNRN). Residues 598–618 (TIISACAIFSSFSCVLIIFGA) form a helical membrane-spanning segment. At 619-708 (KFWKIYKPVE…SSRAAAQNDN (90 aa)) the chain is on the cytoplasmic side. Residues 638–681 (KPQKSYSGSGGSGNSSGSKSKKTSAHSSTSGVKSGTSAPTQTSQ) are disordered. The segment covering 669–681 (VKSGTSAPTQTSQ) has biased composition (polar residues).

The protein in the N-terminal section; belongs to the BMP lipoprotein family. It in the C-terminal section; belongs to the G-protein coupled receptor 3 family. GABA-B receptor subfamily.

The protein localises to the membrane. This Dictyostelium discoideum (Social amoeba) protein is Metabotropic glutamate receptor-like protein L (far1).